Reading from the N-terminus, the 336-residue chain is Ornithine carbamoyltransferase, catabolic (336 aa).

Carbamoyl phosphate-binding positions include 57–60 (STRT), Gln84, Arg108, and 135–138 (HPTQ). Residues Asn168, Asp232, and 236–237 (SM) contribute to the L-ornithine site. Carbamoyl phosphate is bound by residues 274–275 (CL) and Arg321.

It belongs to the aspartate/ornithine carbamoyltransferase superfamily. OTCase family.

It is found in the cytoplasm. The catalysed reaction is carbamoyl phosphate + L-ornithine = L-citrulline + phosphate + H(+). It functions in the pathway amino-acid degradation; L-arginine degradation via ADI pathway; carbamoyl phosphate from L-arginine: step 2/2. In terms of biological role, reversibly catalyzes the transfer of the carbamoyl group from carbamoyl phosphate (CP) to the N(epsilon) atom of ornithine (ORN) to produce L-citrulline. In Ectopseudomonas mendocina (Pseudomonas mendocina), this protein is Ornithine carbamoyltransferase, catabolic (arcB).